Consider the following 558-residue polypeptide: MDAIVLWLREVFLEPSVTQTIIILSLVCALGLQLGKLRIGTISLGITFVFFVGILASHFGVTTDPVMLTFAQNFGLVIFVYALGLQVGPSFFPSLKKGGIAQNLISLGLVLLTFLLCILLYYILGISMPNLMGIVAGATTNTPALGAAQTTLHQINPDATAEMAEMALACAVTYPLGVVGVIIALALLKVMMPKVEERDDSEAPKAFFSEYEICNPALDGKSVREVALLLKRPFVITRVWHNGKVEIPTSDMILYFGDHILAVSGEEDTSQLEILFGKREMKDWNRPDIDWNSVDKQLVSRRLVITRPKLNGVRLGMLKIRNLYGVNISRVDRAGVELLPDRDLRLQLGDRLTVVGEGKAVERVAEILGDEVKQLDNPHLTTLFGGLVLGCVFGMIPFYLPGVSMPIKLGLAGGPIIIGILMGAFGPRFHLTTYVTNSANLLLRQFGIILYLGGLGLASGANFFDTIIHGDGLLWVGAGFLITMLPTLLVGWASIKLLRNRYDGTAGMICGSTANPMALDYVNSQLKGDGASVVYATVYPLSMFVRIIFAQIMILIFA.

5 consecutive transmembrane segments (helical) span residues 15–32 (PSVTQTIIILSLVCALGL), 39–61 (IGTISLGITFVFFVGILASHFGV), 76–95 (LVIFVYALGLQVGPSFFPSL), 104–126 (LISLGLVLLTFLLCILLYYILGI), and 166–188 (MALACAVTYPLGVVGVIIALALL). RCK C-terminal domains follow at residues 196–278 (EERD…LFGK) and 286–370 (RPDI…ILGD). A run of 5 helical transmembrane segments spans residues 383–405 (LFGGLVLGCVFGMIPFYLPGVSM), 409–426 (LGLAGGPIIIGILMGAFG), 446–468 (FGIILYLGGLGLASGANFFDTII), 473–495 (LLWVGAGFLITMLPTLLVGWASI), and 533–555 (VVYATVYPLSMFVRIIFAQIMIL).

Belongs to the AAE transporter (TC 2.A.81) family.

The protein resides in the cell membrane. This is an uncharacterized protein from Porphyromonas gingivalis (strain ATCC BAA-308 / W83).